The chain runs to 247 residues: Carboxy-S-adenosyl-L-methionine synthase (247 aa).

S-adenosyl-L-methionine is bound by residues tyrosine 39, 64-66 (GCS), 89-90 (DN), 117-118 (DI), asparagine 132, and arginine 199.

This sequence belongs to the class I-like SAM-binding methyltransferase superfamily. Cx-SAM synthase family. In terms of assembly, homodimer.

The enzyme catalyses prephenate + S-adenosyl-L-methionine = carboxy-S-adenosyl-L-methionine + 3-phenylpyruvate + H2O. Functionally, catalyzes the conversion of S-adenosyl-L-methionine (SAM) to carboxy-S-adenosyl-L-methionine (Cx-SAM). The chain is Carboxy-S-adenosyl-L-methionine synthase from Shigella sonnei (strain Ss046).